Consider the following 467-residue polypeptide: Asparagine--tRNA ligase (467 aa).

The protein belongs to the class-II aminoacyl-tRNA synthetase family. As to quaternary structure, homodimer.

It localises to the cytoplasm. The catalysed reaction is tRNA(Asn) + L-asparagine + ATP = L-asparaginyl-tRNA(Asn) + AMP + diphosphate + H(+). This is Asparagine--tRNA ligase from Actinobacillus succinogenes (strain ATCC 55618 / DSM 22257 / CCUG 43843 / 130Z).